The following is a 299-amino-acid chain: NAD kinase (299 aa).

Asp-71 (proton acceptor) is an active-site residue. Residues 71–72 (DG), 145–146 (ND), Arg-173, Asp-175, 186–191 (TAYALS), Ala-210, and Gln-248 contribute to the NAD(+) site.

The protein belongs to the NAD kinase family. It depends on a divalent metal cation as a cofactor.

The protein resides in the cytoplasm. It carries out the reaction NAD(+) + ATP = ADP + NADP(+) + H(+). In terms of biological role, involved in the regulation of the intracellular balance of NAD and NADP, and is a key enzyme in the biosynthesis of NADP. Catalyzes specifically the phosphorylation on 2'-hydroxyl of the adenosine moiety of NAD to yield NADP. This is NAD kinase from Bordetella avium (strain 197N).